Reading from the N-terminus, the 267-residue chain is Aspartate/glutamate leucyltransferase (267 aa).

Residues 246–267 are disordered; the sequence is EQEEQTRPLFRPSATGFSTGQE.

It belongs to the R-transferase family. Bpt subfamily.

The protein resides in the cytoplasm. The catalysed reaction is N-terminal L-glutamyl-[protein] + L-leucyl-tRNA(Leu) = N-terminal L-leucyl-L-glutamyl-[protein] + tRNA(Leu) + H(+). The enzyme catalyses N-terminal L-aspartyl-[protein] + L-leucyl-tRNA(Leu) = N-terminal L-leucyl-L-aspartyl-[protein] + tRNA(Leu) + H(+). Functions in the N-end rule pathway of protein degradation where it conjugates Leu from its aminoacyl-tRNA to the N-termini of proteins containing an N-terminal aspartate or glutamate. This chain is Aspartate/glutamate leucyltransferase, found in Granulibacter bethesdensis (strain ATCC BAA-1260 / CGDNIH1).